The chain runs to 301 residues: F1 operon positive regulatory protein (301 aa).

An HTH araC/xylS-type domain is found at 8–107 (NSIIQYIEEN…GYTPRQYRMI (100 aa)). 2 consecutive DNA-binding regions (H-T-H motif) follow at residues 26 to 47 (DCLVLYSGFSRRYLQISFKEYV) and 74 to 97 (IIEISAKLFYDSQQTFTREFKKIF).

Functionally, positive regulator of F1 operon expression. The protein is F1 operon positive regulatory protein (caf1R) of Yersinia pestis.